The following is a 342-amino-acid chain: Farnesyl pyrophosphate synthase 2 (342 aa).

Positions 47, 50, and 86 each coordinate isopentenyl diphosphate. Aspartate 93 and aspartate 97 together coordinate Mg(2+). Arginine 102 provides a ligand contact to dimethylallyl diphosphate. Isopentenyl diphosphate is bound at residue arginine 103. Lysine 190, threonine 191, glutamine 229, lysine 246, and lysine 255 together coordinate dimethylallyl diphosphate.

This sequence belongs to the FPP/GGPP synthase family. Mg(2+) serves as cofactor.

The protein localises to the cytoplasm. The catalysed reaction is isopentenyl diphosphate + dimethylallyl diphosphate = (2E)-geranyl diphosphate + diphosphate. It catalyses the reaction isopentenyl diphosphate + (2E)-geranyl diphosphate = (2E,6E)-farnesyl diphosphate + diphosphate. It participates in isoprenoid biosynthesis; farnesyl diphosphate biosynthesis; farnesyl diphosphate from geranyl diphosphate and isopentenyl diphosphate: step 1/1. Its pathway is isoprenoid biosynthesis; geranyl diphosphate biosynthesis; geranyl diphosphate from dimethylallyl diphosphate and isopentenyl diphosphate: step 1/1. Its function is as follows. Catalyzes the sequential condensation of isopentenyl pyrophosphate with the allylic pyrophosphates, dimethylallyl pyrophosphate, and then with the resultant geranylpyrophosphate to the ultimate product farnesyl pyrophosphate. In Lupinus albus (White lupine), this protein is Farnesyl pyrophosphate synthase 2 (FPS2).